A 207-amino-acid chain; its full sequence is ATP synthase subunit 5, mitochondrial (207 aa).

This sequence belongs to the ATPase delta chain family. As to quaternary structure, F-type ATPases have 2 components, CF(1) - the catalytic core - and CF(0) - the membrane proton channel. CF(1) has five subunits: alpha(3), beta(3), gamma(1), delta(1), epsilon(1). CF(0) has three main subunits: a, b and c.

It localises to the mitochondrion. The protein resides in the mitochondrion inner membrane. Functionally, mitochondrial membrane ATP synthase (F(1)F(0) ATP synthase or Complex V) produces ATP from ADP in the presence of a proton gradient across the membrane which is generated by electron transport complexes of the respiratory chain. F-type ATPases consist of two structural domains, F(1) - containing the extramembraneous catalytic core and F(0) - containing the membrane proton channel, linked together by a central stalk and a peripheral stalk. During catalysis, ATP synthesis in the catalytic domain of F(1) is coupled via a rotary mechanism of the central stalk subunits to proton translocation. Part of the complex F(0) domain and the peripheric stalk, which acts as a stator to hold the catalytic alpha(3)beta(3) subcomplex and subunit a/ATP6 static relative to the rotary elements. The sequence is that of ATP synthase subunit 5, mitochondrial (ATP5) from Eremothecium gossypii (strain ATCC 10895 / CBS 109.51 / FGSC 9923 / NRRL Y-1056) (Yeast).